Reading from the N-terminus, the 165-residue chain is Endoribonuclease YbeY (165 aa).

Residues His-130, His-134, and His-140 each contribute to the Zn(2+) site.

It belongs to the endoribonuclease YbeY family. Zn(2+) is required as a cofactor.

The protein resides in the cytoplasm. Its function is as follows. Single strand-specific metallo-endoribonuclease involved in late-stage 70S ribosome quality control and in maturation of the 3' terminus of the 16S rRNA. This chain is Endoribonuclease YbeY, found in Streptococcus thermophilus (strain CNRZ 1066).